A 135-amino-acid chain; its full sequence is Large ribosomal subunit protein bL19 (135 aa).

It belongs to the bacterial ribosomal protein bL19 family.

This protein is located at the 30S-50S ribosomal subunit interface and may play a role in the structure and function of the aminoacyl-tRNA binding site. This is Large ribosomal subunit protein bL19 from Xanthomonas campestris pv. campestris (strain 8004).